The sequence spans 505 residues: Histidine--tRNA ligase (505 aa).

Belongs to the class-II aminoacyl-tRNA synthetase family. In terms of assembly, homodimer.

The protein resides in the cytoplasm. It carries out the reaction tRNA(His) + L-histidine + ATP = L-histidyl-tRNA(His) + AMP + diphosphate + H(+). This chain is Histidine--tRNA ligase, found in Jannaschia sp. (strain CCS1).